We begin with the raw amino-acid sequence, 550 residues long: ATP synthase subunit alpha (550 aa).

ATP is bound at residue 172-179; sequence GDRKTGKT. The disordered stretch occupies residues 521 to 550; that stretch reads EPAAEPLAGEEDRETVTRFHDDATDRPAGS. Residues 534 to 550 are compositionally biased toward basic and acidic residues; that stretch reads ETVTRFHDDATDRPAGS.

The protein belongs to the ATPase alpha/beta chains family. As to quaternary structure, F-type ATPases have 2 components, CF(1) - the catalytic core - and CF(0) - the membrane proton channel. CF(1) has five subunits: alpha(3), beta(3), gamma(1), delta(1), epsilon(1). CF(0) has three main subunits: a(1), b(2) and c(9-12). The alpha and beta chains form an alternating ring which encloses part of the gamma chain. CF(1) is attached to CF(0) by a central stalk formed by the gamma and epsilon chains, while a peripheral stalk is formed by the delta and b chains.

The protein localises to the cell membrane. The enzyme catalyses ATP + H2O + 4 H(+)(in) = ADP + phosphate + 5 H(+)(out). Its function is as follows. Produces ATP from ADP in the presence of a proton gradient across the membrane. The alpha chain is a regulatory subunit. The polypeptide is ATP synthase subunit alpha (Salinispora tropica (strain ATCC BAA-916 / DSM 44818 / JCM 13857 / NBRC 105044 / CNB-440)).